We begin with the raw amino-acid sequence, 312 residues long: uncharacterized protein (312 aa).

A signal peptide spans 1–28 (MNSADTQEPKSFNHTDMWTAFGTTMSGA).

Its function is as follows. The FAS-operon encodes genes involved in cytokinin production and in host plant fasciation (leafy gall). This is an uncharacterized protein from Rhodococcoides fascians (Rhodococcus fascians).